The chain runs to 424 residues: Histidine--tRNA ligase (424 aa).

This sequence belongs to the class-II aminoacyl-tRNA synthetase family. In terms of assembly, homodimer.

It localises to the cytoplasm. The catalysed reaction is tRNA(His) + L-histidine + ATP = L-histidyl-tRNA(His) + AMP + diphosphate + H(+). The polypeptide is Histidine--tRNA ligase (Shewanella frigidimarina (strain NCIMB 400)).